Reading from the N-terminus, the 136-residue chain is MKHQNPSKRLLRLSIKYLLAAAAVVLTYFAVIYILFSLAGTSYRSAAHVLLFAVVFLVLGLCFEPFERLMIHSFTFFKTGKRLFILLAGIVQLLFLWMTAHTTDQLISDIWLSTTEEMIVAAVFLILDKCNSALPS.

4 consecutive transmembrane segments (helical) span residues Leu18–Leu38, Ala46–Phe66, Leu83–Thr103, and Leu106–Ile126.

Its subcellular location is the cell membrane. Its function is as follows. Negatively regulates RNA polymerase sigma factor SigO-dependent transcription. Prevents the expression or secretion of OxdC under nonstress conditions. May act as an anti-sigma factor. The chain is Membrane-bound negative regulator YvrL (yvrL) from Bacillus subtilis (strain 168).